Here is a 451-residue protein sequence, read N- to C-terminus: MNLKVKQKIPLKIKRMGINGEGIGFYQKTLVFVPGALKGEDIYCQITSIRRNFVEAKLLKVNKKSKFRIVPSCTIYNECGGCQIMHLHYDKQLEFKTDLLHQALKKFAPAGYENYEIRPTIGMQEPKYYRAKLQFQTRKFKNQVKAGLYAQNSHYLVELKDCLVQDKETQVIANRLAELLTYHQIPITDERKVLGVRTIMVRRARKTGQVQIIIVTNRQLNLTQLVKELVKDFPEVVTVAVNTNTAKTSEIYGEKTEIIWGQESIQEGVLNYEFSLSPRAFYQLNPEQTEVLYSEAVKALDVDKEDHLIDAYCGVGTIGFAFAKKVKTLRGMDIIPEAIEDAKRNAKRMGFDNTHYEAGTAEEIIPRWYKEGYRADALIVDPPRTGLDDKLLDTILTYVPEKMVYISCNVSTLARDLVRLVEVYDLHYIQSVDMFPHTARTEAVVKLIKKV.

One can recognise a TRAM domain in the interval 2-60; the sequence is NLKVKQKIPLKIKRMGINGEGIGFYQKTLVFVPGALKGEDIYCQITSIRRNFVEAKLLK. Residues C73, C79, C82, and C162 each coordinate [4Fe-4S] cluster. Positions 283, 312, 333, and 381 each coordinate S-adenosyl-L-methionine. C408 acts as the Nucleophile in catalysis.

The protein belongs to the class I-like SAM-binding methyltransferase superfamily. RNA M5U methyltransferase family.

This is an uncharacterized protein from Streptococcus pneumoniae serotype 4 (strain ATCC BAA-334 / TIGR4).